The chain runs to 269 residues: Formamidopyrimidine-DNA glycosylase (269 aa).

Catalysis depends on proline 2, which acts as the Schiff-base intermediate with DNA. Glutamate 3 functions as the Proton donor in the catalytic mechanism. Lysine 57 (proton donor; for beta-elimination activity) is an active-site residue. 3 residues coordinate DNA: histidine 90, arginine 109, and lysine 150. The FPG-type zinc-finger motif lies at 235–269; sequence RVYGRNGEPCRTCGTPIETAKHGQRSTFFCRRCQV. Arginine 259 (proton donor; for delta-elimination activity) is an active-site residue.

It belongs to the FPG family. Monomer. The cofactor is Zn(2+).

It carries out the reaction Hydrolysis of DNA containing ring-opened 7-methylguanine residues, releasing 2,6-diamino-4-hydroxy-5-(N-methyl)formamidopyrimidine.. It catalyses the reaction 2'-deoxyribonucleotide-(2'-deoxyribose 5'-phosphate)-2'-deoxyribonucleotide-DNA = a 3'-end 2'-deoxyribonucleotide-(2,3-dehydro-2,3-deoxyribose 5'-phosphate)-DNA + a 5'-end 5'-phospho-2'-deoxyribonucleoside-DNA + H(+). Involved in base excision repair of DNA damaged by oxidation or by mutagenic agents. Acts as a DNA glycosylase that recognizes and removes damaged bases. Has a preference for oxidized purines, such as 7,8-dihydro-8-oxoguanine (8-oxoG). Has AP (apurinic/apyrimidinic) lyase activity and introduces nicks in the DNA strand. Cleaves the DNA backbone by beta-delta elimination to generate a single-strand break at the site of the removed base with both 3'- and 5'-phosphates. This is Formamidopyrimidine-DNA glycosylase from Pectobacterium atrosepticum (strain SCRI 1043 / ATCC BAA-672) (Erwinia carotovora subsp. atroseptica).